We begin with the raw amino-acid sequence, 150 residues long: Large ribosomal subunit protein bL9 (150 aa).

Belongs to the bacterial ribosomal protein bL9 family.

In terms of biological role, binds to the 23S rRNA. The polypeptide is Large ribosomal subunit protein bL9 (Serratia proteamaculans (strain 568)).